The chain runs to 442 residues: MRLSRFFMPILKENPKEAEIVSHRLMLRTGMVRQQSAGIYTWLPLGKRVLDKVNAIIREEQNRSGAIELLMPTLQSAELWQESGRYDAYGKEMLRIKDRQDRPMLYGPTNEEMITDIFRSYVKSYRNLPLNLYHIQLKFRDEIRPRFGTMRSREFLMKDAYSFDLDRAGAEHAYNKMFAAYLRTFDRMGLRAIPMRADTGPIGGNLSHEFIILADTGESEVFCHKDFLGFDIPGEDTNFDDVAGLKTIFDKWTSRYAATSEMHDEAAFGAIAEGERLSARGIEVGHIFYFGTKYSEAMGAKVLGPDGKEHTVHMGSYGIGPTRLVPAIIEASHDDNGIIWPKGIAPFDVVVINMKTGDEACDAACGKVYSDLGKAGFDVLLDDTDERAGGKFATADLIGVPVQVIVGPRSIANGEVEVKDRKTGARETMTVEAAINKLVAAR.

This sequence belongs to the class-II aminoacyl-tRNA synthetase family. ProS type 2 subfamily. Homodimer.

The protein localises to the cytoplasm. It carries out the reaction tRNA(Pro) + L-proline + ATP = L-prolyl-tRNA(Pro) + AMP + diphosphate. Catalyzes the attachment of proline to tRNA(Pro) in a two-step reaction: proline is first activated by ATP to form Pro-AMP and then transferred to the acceptor end of tRNA(Pro). The chain is Proline--tRNA ligase from Rhizobium meliloti (strain 1021) (Ensifer meliloti).